An 86-amino-acid chain; its full sequence is Large ribosomal subunit protein bL31 (86 aa).

Residues 65-86 (YGMGSANSATSKEQKEEKDSKK) form a disordered region. Residues 76–86 (KEQKEEKDSKK) are compositionally biased toward basic and acidic residues.

The protein belongs to the bacterial ribosomal protein bL31 family. Type A subfamily. Part of the 50S ribosomal subunit.

In terms of biological role, binds the 23S rRNA. The polypeptide is Large ribosomal subunit protein bL31 (Prochlorococcus marinus (strain AS9601)).